Consider the following 236-residue polypeptide: Phosphoribosylaminoimidazole-succinocarboxamide synthase (236 aa).

This sequence belongs to the SAICAR synthetase family.

The enzyme catalyses 5-amino-1-(5-phospho-D-ribosyl)imidazole-4-carboxylate + L-aspartate + ATP = (2S)-2-[5-amino-1-(5-phospho-beta-D-ribosyl)imidazole-4-carboxamido]succinate + ADP + phosphate + 2 H(+). It functions in the pathway purine metabolism; IMP biosynthesis via de novo pathway; 5-amino-1-(5-phospho-D-ribosyl)imidazole-4-carboxamide from 5-amino-1-(5-phospho-D-ribosyl)imidazole-4-carboxylate: step 1/2. In Rickettsia felis (strain ATCC VR-1525 / URRWXCal2) (Rickettsia azadi), this protein is Phosphoribosylaminoimidazole-succinocarboxamide synthase.